The primary structure comprises 668 residues: Fructose-1,6-bisphosphatase class 3 (668 aa).

This sequence belongs to the FBPase class 3 family. Requires Mn(2+) as cofactor.

The enzyme catalyses beta-D-fructose 1,6-bisphosphate + H2O = beta-D-fructose 6-phosphate + phosphate. Its pathway is carbohydrate biosynthesis; gluconeogenesis. This is Fructose-1,6-bisphosphatase class 3 from Clostridium botulinum (strain 657 / Type Ba4).